The primary structure comprises 306 residues: Nod factor export ATP-binding protein I (306 aa).

In terms of domain architecture, ABC transporter spans 8 to 238; sequence IDLVGVRKSF…HIGCNVIEIY (231 aa). Residue 40 to 47 coordinates ATP; it reads GPNGAGKS.

The protein belongs to the ABC transporter superfamily. Lipooligosaccharide exporter (TC 3.A.1.102) family. In terms of assembly, the complex is composed of two ATP-binding proteins (NodI) and two transmembrane proteins (NodJ).

The protein localises to the cell inner membrane. In terms of biological role, part of the ABC transporter complex NodIJ involved in the export of the nodulation factors (Nod factors), the bacterial signal molecules that induce symbiosis and subsequent nodulation induction. Nod factors are LCO (lipo-chitin oligosaccharide), a modified beta-1,4-linked N-acetylglucosamine oligosaccharide. This subunit is responsible for energy coupling to the transport system. The protein is Nod factor export ATP-binding protein I of Bradyrhizobium diazoefficiens (strain JCM 10833 / BCRC 13528 / IAM 13628 / NBRC 14792 / USDA 110).